The following is a 105-amino-acid chain: UPF0235 protein RAF_ORF1191 (105 aa).

It belongs to the UPF0235 family.

In Rickettsia africae (strain ESF-5), this protein is UPF0235 protein RAF_ORF1191.